A 75-amino-acid chain; its full sequence is Metallothionein-like protein 1B (75 aa).

Belongs to the metallothionein superfamily. Type 15 family.

Functionally, metallothioneins have a high content of cysteine residues that bind various heavy metals. This chain is Metallothionein-like protein 1B (MT1B), found in Vicia faba (Broad bean).